Reading from the N-terminus, the 433-residue chain is tRNA-queuosine alpha-mannosyltransferase (433 aa).

Residues 194-244 (PAAKSHIQTSSPSSYPDVEPPEKMLNVAGTNQSHEPTSVTPHQETASPLCG) form a disordered region. The span at 221-239 (AGTNQSHEPTSVTPHQETA) shows a compositional bias: polar residues.

This sequence belongs to the glycosyltransferase group 1 family. Glycosyltransferase 4 subfamily.

The protein localises to the cytoplasm. It is found in the nucleus. It carries out the reaction queuosine(34) in tRNA(Asp) + GDP-alpha-D-mannose = O-4''-alpha-D-mannosylqueuosine(34) in tRNA(Asp) + GDP + H(+). Its function is as follows. Glycosyltransferase that specifically catalyzes mannosylation of cytoplasmic tRNA(Asp) modified with queuosine at position 34 (queuosine(34)). Mannosylates the cyclopentene moiety of queuosine(34) in tRNA(Asp) to form mannosyl-queuosine(34). Mannosylation of queuosine(34) in tRNA(Asp) is required to slow-down elongation at cognate codons, GAC and GAU, thereby regulating protein translation. This Danio rerio (Zebrafish) protein is tRNA-queuosine alpha-mannosyltransferase (gtdc1).